Here is a 275-residue protein sequence, read N- to C-terminus: Large ribosomal subunit protein uL2 (275 aa).

Residues 223 to 260 (VAMNPVDHPHGGGEGRTSGGRHPVSPWGLPTKGYKTRS) are disordered.

Belongs to the universal ribosomal protein uL2 family. In terms of assembly, part of the 50S ribosomal subunit. Forms a bridge to the 30S subunit in the 70S ribosome.

Functionally, one of the primary rRNA binding proteins. Required for association of the 30S and 50S subunits to form the 70S ribosome, for tRNA binding and peptide bond formation. It has been suggested to have peptidyltransferase activity; this is somewhat controversial. Makes several contacts with the 16S rRNA in the 70S ribosome. This chain is Large ribosomal subunit protein uL2, found in Legionella pneumophila (strain Lens).